The sequence spans 290 residues: Arylamine N-acetyltransferase 1 (290 aa).

Methionine 1 is modified (N-acetylmethionine). The Acyl-thioester intermediate role is filled by cysteine 68. Serine 103 contacts CoA. Residue 106–107 (VH) participates in substrate binding. Catalysis depends on residues histidine 107 and aspartate 122. Tyrosine 208 contributes to the CoA binding site.

Belongs to the arylamine N-acetyltransferase family.

It localises to the cytoplasm. It carries out the reaction an arylamine + acetyl-CoA = an N-acetylarylamine + CoA. Its function is as follows. Participates in the detoxification of a plethora of hydrazine and arylamine drugs. Isoniazid, 2-aminofluorene and anisidine are preferred substrates for NAT-1. No activity with p-aminobenzoic acid (PABA) nor SMZ. The protein is Arylamine N-acetyltransferase 1 (Nat1) of Mus musculus (Mouse).